We begin with the raw amino-acid sequence, 235 residues long: Large ribosomal subunit protein uL1 (235 aa).

This sequence belongs to the universal ribosomal protein uL1 family. As to quaternary structure, part of the 50S ribosomal subunit.

In terms of biological role, binds directly to 23S rRNA. The L1 stalk is quite mobile in the ribosome, and is involved in E site tRNA release. Functionally, protein L1 is also a translational repressor protein, it controls the translation of the L11 operon by binding to its mRNA. The protein is Large ribosomal subunit protein uL1 of Citrobacter koseri (strain ATCC BAA-895 / CDC 4225-83 / SGSC4696).